The primary structure comprises 144 residues: Large ribosomal subunit protein uL11 (144 aa).

It belongs to the universal ribosomal protein uL11 family. In terms of assembly, part of the ribosomal stalk of the 50S ribosomal subunit. Interacts with L10 and the large rRNA to form the base of the stalk. L10 forms an elongated spine to which L12 dimers bind in a sequential fashion forming a multimeric L10(L12)X complex. In terms of processing, one or more lysine residues are methylated.

Functionally, forms part of the ribosomal stalk which helps the ribosome interact with GTP-bound translation factors. The sequence is that of Large ribosomal subunit protein uL11 from Granulibacter bethesdensis (strain ATCC BAA-1260 / CGDNIH1).